A 1788-amino-acid polypeptide reads, in one-letter code: Protein TIC 214 (1788 aa).

The next 6 membrane-spanning stretches (helical) occupy residues 25–45, 70–90, 95–115, 132–152, 180–200, and 223–243; these read IINS…FSIG, IGFI…PLHL, PHTI…WNNH, LNIQ…HFIL, VGWL…LFWI, and IFSI…PSPL. Disordered stretches follow at residues 248–297 and 1482–1526; these read LKKT…EEKE and DLEN…DFDR. 2 stretches are compositionally biased toward basic and acidic residues: residues 253 to 277 and 1513 to 1526; these read KREE…EKGT and PLKK…DFDR.

The protein belongs to the TIC214 family. As to quaternary structure, part of the Tic complex.

The protein resides in the plastid. Its subcellular location is the chloroplast inner membrane. Its function is as follows. Involved in protein precursor import into chloroplasts. May be part of an intermediate translocation complex acting as a protein-conducting channel at the inner envelope. The chain is Protein TIC 214 from Ranunculus macranthus (Large buttercup).